The sequence spans 502 residues: Chlorophyllide reductase 52.5 kDa chain (502 aa).

3 consecutive transmembrane segments (helical) span residues 70 to 87, 131 to 147, and 221 to 238; these read VGTIISGSACCTYGLSFV, AIVVTNLCVPTASGVPL, and VMIGALLAPLGLAAGPVV.

The protein belongs to the BchN/ChlN family. As to quaternary structure, chlorophyllide reductase is composed of three subunits; BchX, BchY and BchZ. Forms a heterodimer of one BchY and one BchZ subunit.

Its subcellular location is the cell membrane. It carries out the reaction 3-deacetyl-3-vinylbacteriochlorophyllide a + 2 oxidized [2Fe-2S]-[ferredoxin] + ADP + phosphate = chlorophyllide a + 2 reduced [2Fe-2S]-[ferredoxin] + ATP + H2O + H(+). It catalyses the reaction bacteriochlorophyllide a + 2 oxidized [2Fe-2S]-[ferredoxin] + ADP + phosphate = 3-acetyl-3-devinylchlorophyllide a + 2 reduced [2Fe-2S]-[ferredoxin] + ATP + H2O + H(+). The enzyme catalyses 3-deacetyl-3-(1-hydroxyethyl)bacteriochlorophyllide a + 2 oxidized [2Fe-2S]-[ferredoxin] + ADP + phosphate = 3-devinyl-3-(1-hydroxyethyl)chlorophyllide a + 2 reduced [2Fe-2S]-[ferredoxin] + ATP + H2O + H(+). Its pathway is porphyrin-containing compound metabolism; bacteriochlorophyll biosynthesis (light-independent). In terms of biological role, converts chlorophylls (Chl) into bacteriochlorophylls (BChl) by reducing ring B of the tetrapyrrole. This chain is Chlorophyllide reductase 52.5 kDa chain (bchY), found in Cereibacter sphaeroides (strain ATCC 17023 / DSM 158 / JCM 6121 / CCUG 31486 / LMG 2827 / NBRC 12203 / NCIMB 8253 / ATH 2.4.1.) (Rhodobacter sphaeroides).